The primary structure comprises 432 residues: Adenylosuccinate synthetase (432 aa).

GTP is bound by residues 13-19 (GDEGKGK) and 41-43 (GHT). The active-site Proton acceptor is D14. D14 and G41 together coordinate Mg(2+). IMP contacts are provided by residues 14-17 (DEGK), 39-42 (NAGH), T130, R144, Q225, T240, and R304. H42 serves as the catalytic Proton donor. 300-306 (ATTGRRR) provides a ligand contact to substrate. Residues R306, 332–334 (KLD), and 415–417 (STG) each bind GTP.

This sequence belongs to the adenylosuccinate synthetase family. As to quaternary structure, homodimer. It depends on Mg(2+) as a cofactor.

The protein localises to the cytoplasm. It catalyses the reaction IMP + L-aspartate + GTP = N(6)-(1,2-dicarboxyethyl)-AMP + GDP + phosphate + 2 H(+). It functions in the pathway purine metabolism; AMP biosynthesis via de novo pathway; AMP from IMP: step 1/2. Its function is as follows. Plays an important role in the de novo pathway of purine nucleotide biosynthesis. Catalyzes the first committed step in the biosynthesis of AMP from IMP. The sequence is that of Adenylosuccinate synthetase from Klebsiella pneumoniae subsp. pneumoniae (strain ATCC 700721 / MGH 78578).